The chain runs to 87 residues: Putative regulatory protein BH2513 (87 aa).

It belongs to the RemA family.

This chain is Putative regulatory protein BH2513, found in Halalkalibacterium halodurans (strain ATCC BAA-125 / DSM 18197 / FERM 7344 / JCM 9153 / C-125) (Bacillus halodurans).